The sequence spans 288 residues: MRNTSKELHGAASRYAPCDWYYHLPVKQSEKAVDAPPASQIPGLSDPREAPSGHTLGLRRYWVKETDSEYVKLAKQGGRPDLLKHFAPGTTKGSPVAYSLPDWYIHHSKPPTADQRQVPAVSIPDYMVYEEFNPDQATGNFESRMGPFDFDMKTIWQREAEELEKEKKKVRLPAIKSKYPSKVGTPLGHREPAGSKLSFPPIPGQRPSSPTNFSKLISNGYKDEWLQQQADSDKRAPQTPQSSVSSPSPLDAELPADPEAPGDTTEAAESSPLSSAAPPPDSTPVELK.

Disordered regions lie at residues 31-52 (KAVD…EAPS) and 179-288 (YPSK…VELK). The segment covering 206 to 217 (RPSSPTNFSKLI) has biased composition (polar residues). Over residues 221–236 (YKDEWLQQQADSDKRA) the composition is skewed to basic and acidic residues. Low complexity-rich tracts occupy residues 237–249 (PQTP…SPSP) and 267–276 (AAESSPLSSA).

This is an uncharacterized protein from Bos taurus (Bovine).